We begin with the raw amino-acid sequence, 190 residues long: Peptidyl-tRNA hydrolase (190 aa).

Phenylalanine 14 is a tRNA binding site. Histidine 19 functions as the Proton acceptor in the catalytic mechanism. Positions 64, 66, and 112 each coordinate tRNA.

Belongs to the PTH family. In terms of assembly, monomer.

The protein localises to the cytoplasm. It carries out the reaction an N-acyl-L-alpha-aminoacyl-tRNA + H2O = an N-acyl-L-amino acid + a tRNA + H(+). Hydrolyzes ribosome-free peptidyl-tRNAs (with 1 or more amino acids incorporated), which drop off the ribosome during protein synthesis, or as a result of ribosome stalling. In terms of biological role, catalyzes the release of premature peptidyl moieties from peptidyl-tRNA molecules trapped in stalled 50S ribosomal subunits, and thus maintains levels of free tRNAs and 50S ribosomes. The protein is Peptidyl-tRNA hydrolase of Staphylococcus saprophyticus subsp. saprophyticus (strain ATCC 15305 / DSM 20229 / NCIMB 8711 / NCTC 7292 / S-41).